The primary structure comprises 229 residues: Interleukin-22 receptor subunit alpha-2 (229 aa).

The first 19 residues, 1–19 (MPKHCFLGLLIMLLTTATE), serve as a signal peptide directing secretion. Fibronectin type-III domains are found at residues 28–127 (KPQK…TKLD) and 128–229 (PPVV…VQIP). A glycan (N-linked (GlcNAc...) asparagine) is linked at asparagine 54. 2 disulfides stabilise this stretch: cysteine 76-cysteine 84 and cysteine 204-cysteine 225.

The protein belongs to the type II cytokine receptor family.

It is found in the secreted. In terms of biological role, receptor for IL22. Binds to IL22, prevents interaction with the functional IL-22R complex and blocks the activity of IL22 (in vitro). May play an important role as an IL22 antagonist in the regulation of inflammatory responses. This Rattus norvegicus (Rat) protein is Interleukin-22 receptor subunit alpha-2 (Il22ra2).